The chain runs to 319 residues: MSSYFVNSFSGRYPNGPDYQLLNYGASSGALNGGTYRDSSTATMHHATGSYGYTYNGMDLTVNNRRGGSGDDAVTSGHFGGGSLVGDALGFGSPTTERSFRQPSSCSLASAAESLLSPGSGDTSLGARSSSPRSEQSGSGNLSSTNLSSSTNISSSGGGGGGGTVQRFTELDDASTESEELRRDNGHGGNPVPRTGHSHGVQKQEGGPAGAAAGNTVGSEGQPPQIFPWMRKLHISHDMTGPDGKRARTAYTRYQTLELEKEFHFNRYLTRRRRIEIAHALCLTERQIKIWFQNRRMKWKKDNKLKSMSLATPGSAFQP.

The segment at 114–224 (SLLSPGSGDT…NTVGSEGQPP (111 aa)) is disordered. Low complexity predominate over residues 128–155 (RSSSPRSEQSGSGNLSSTNLSSSTNISS). The Antp-type hexapeptide motif lies at 226–231 (IFPWMR). A DNA-binding region (homeobox) is located at residues 244 to 303 (GKRARTAYTRYQTLELEKEFHFNRYLTRRRRIEIAHALCLTERQIKIWFQNRRMKWKKDN).

Belongs to the Antp homeobox family.

The protein localises to the nucleus. Functionally, sequence-specific transcription factor which is part of a developmental regulatory system that provides cells with specific positional identities on the anterior-posterior axis. This Takifugu rubripes (Japanese pufferfish) protein is Homeobox protein Hox-B5a (hoxb5a).